A 969-amino-acid chain; its full sequence is RNA polymerase-associated protein RapA (969 aa).

Positions 164–334 (EVGRRHAPRV…FARLRLLDAD (171 aa)) constitute a Helicase ATP-binding domain. 177–184 (DEVGLGKT) contacts ATP. The short motif at 280 to 283 (DEAH) is the DEAH box element. A Helicase C-terminal domain is found at 492-646 (RVNWLLEKVK…TCPTGRAVYD (155 aa)).

It belongs to the SNF2/RAD54 helicase family. RapA subfamily. Interacts with the RNAP. Has a higher affinity for the core RNAP than for the holoenzyme. Its ATPase activity is stimulated by binding to RNAP.

In terms of biological role, transcription regulator that activates transcription by stimulating RNA polymerase (RNAP) recycling in case of stress conditions such as supercoiled DNA or high salt concentrations. Probably acts by releasing the RNAP, when it is trapped or immobilized on tightly supercoiled DNA. Does not activate transcription on linear DNA. Probably not involved in DNA repair. The polypeptide is RNA polymerase-associated protein RapA (Vibrio cholerae serotype O1 (strain ATCC 39315 / El Tor Inaba N16961)).